Here is a 1478-residue protein sequence, read N- to C-terminus: Adhesion G protein-coupled receptor L2 (1478 aa).

The first 25 residues, M1 to G25, serve as a signal peptide directing secretion. At F26–T855 the chain is on the extracellular side. Residues S41 to V130 enclose the SUEL-type lectin domain. An N-linked (GlcNAc...) asparagine glycan is attached at N99. One can recognise an Olfactomedin-like domain in the interval V139–P398. Cysteines 140 and 322 form a disulfide. An N-linked (GlcNAc...) asparagine glycan is attached at N335. Residues V422–K458 form a disordered region. Over residues Q430–S445 the composition is skewed to polar residues. Residues N524, N633, N735, N748, N791, N796, and N817 are each glycosylated (N-linked (GlcNAc...) asparagine). Residues T663–A841 form the GAIN-B domain. Disulfide bonds link C792-C823 and C811-C825. A GPS region spans residues C792–A841. Residues W856 to F876 form a helical membrane-spanning segment. Residues R877–N884 lie on the Cytoplasmic side of the membrane. The chain crosses the membrane as a helical span at residues T885–I905. Residues D906–M911 are Extracellular-facing. Residues I912–M932 traverse the membrane as a helical segment. Residues C933–K955 lie on the Cytoplasmic side of the membrane. Residues Y956 to D976 traverse the membrane as a helical segment. The Extracellular portion of the chain corresponds to Y977–F994. Residues I995–I1015 form a helical membrane-spanning segment. Over T1016–V1056 the chain is Cytoplasmic. A helical membrane pass occupies residues L1057 to I1077. Residues N1078–T1081 lie on the Extracellular side of the membrane. Residues I1082–F1102 traverse the membrane as a helical segment. Topologically, residues H1103–L1478 are cytoplasmic. The interval A1378 to S1419 is disordered. Residues Q1383–P1395 are compositionally biased toward polar residues. Phosphoserine occurs at positions 1393, 1428, and 1449.

This sequence belongs to the G-protein coupled receptor 2 family. Adhesion G-protein coupled receptor (ADGR) subfamily. In terms of assembly, heterodimer of 2 chains generated by proteolytic processing; the large extracellular N-terminal fragment and the membrane-bound C-terminal fragment predominantly remain associated and non-covalently linked. Post-translationally, autoproteolytically processed at the GPS region of the GAIN-B domain; this cleavage modulates receptor activity. In terms of tissue distribution, ubiquitously expressed.

The protein resides in the postsynaptic cell membrane. Its activity is regulated as follows. Forms a heterodimer of 2 chains generated by proteolytic processing that remain associated through non-covalent interactions mediated by the GAIN-B domain. In the inactivated receptor, the Stachel sequence (also named stalk) is embedded in the GAIN-B domain, where it adopts a beta-strand conformation. On activation, the Stachel moves into the 7 transmembrane region and adopts a twisted hook-shaped configuration that forms contacts within the receptor, leading to coupling of a G-alpha protein, which activates signaling. The cleaved GAIN-B and N-terminal domains can then dissociate from the rest of the receptor. In terms of biological role, orphan adhesion G-protein coupled receptor (aGPCR), which mediates synapse specificity. Ligand binding causes a conformation change that triggers signaling via guanine nucleotide-binding proteins (G proteins) and modulates the activity of downstream effectors. Following G-protein coupled receptor activation, associates with cell adhesion molecules that are expressed at the surface of adjacent cells to direct synapse specificity. Specifically mediates the establishment of perforant-path synapses on CA1-region pyramidal neurons in the hippocampus. Localizes to postsynaptic spines in excitatory synapses in the S.lacunosum-moleculare and interacts with presynaptic cell adhesion molecules, such as teneurins, promoting synapse formation. The chain is Adhesion G protein-coupled receptor L2 (ADGRL2) from Bos taurus (Bovine).